The following is a 401-amino-acid chain: 8-amino-7-oxononanoate synthase (401 aa).

Arginine 24 is a substrate binding site. 111–112 (GF) lines the pyridoxal 5'-phosphate pocket. Residue histidine 137 coordinates substrate. Pyridoxal 5'-phosphate contacts are provided by serine 183, histidine 211, and threonine 240. Residue lysine 243 is modified to N6-(pyridoxal phosphate)lysine. Threonine 357 serves as a coordination point for substrate.

The protein belongs to the class-II pyridoxal-phosphate-dependent aminotransferase family. BioF subfamily. Homodimer. Requires pyridoxal 5'-phosphate as cofactor.

The catalysed reaction is 6-carboxyhexanoyl-[ACP] + L-alanine + H(+) = (8S)-8-amino-7-oxononanoate + holo-[ACP] + CO2. Its pathway is cofactor biosynthesis; biotin biosynthesis. In terms of biological role, catalyzes the decarboxylative condensation of pimeloyl-[acyl-carrier protein] and L-alanine to produce 8-amino-7-oxononanoate (AON), [acyl-carrier protein], and carbon dioxide. This chain is 8-amino-7-oxononanoate synthase, found in Xanthomonas campestris pv. campestris (strain B100).